A 256-amino-acid polypeptide reads, in one-letter code: Alcohol dehydrogenase (256 aa).

At Ser-2 the chain carries N-acetylserine. NAD(+) is bound by residues 12–41 and Asp-65; that span reads FVAG…LDRI. Substrate is bound at residue Ser-140. Catalysis depends on Tyr-153, which acts as the Proton acceptor. Lys-157 contributes to the NAD(+) binding site.

It belongs to the short-chain dehydrogenases/reductases (SDR) family. In terms of assembly, homodimer.

It carries out the reaction a primary alcohol + NAD(+) = an aldehyde + NADH + H(+). The enzyme catalyses a secondary alcohol + NAD(+) = a ketone + NADH + H(+). With respect to regulation, inhibited by 2,2,2-trifluoroethanol and pyrazole. The protein is Alcohol dehydrogenase (Adh) of Drosophila melanogaster (Fruit fly).